The sequence spans 392 residues: Selenide, water dikinase 1 (392 aa).

The active site involves Cys-31. ATP contacts are provided by residues Lys-32, 67 to 69, Asp-87, Asp-110, and 161 to 164; these read GMD and GGQT. Mg(2+) is bound at residue Asp-69. Mg(2+) is bound at residue Asp-110. A Mg(2+)-binding site is contributed by Asp-265. A Phosphothreonine modification is found at Thr-387.

The protein belongs to the selenophosphate synthase 1 family. Class II subfamily. In terms of assembly, homodimer. It depends on Mg(2+) as a cofactor.

It is found in the cell membrane. The protein localises to the nucleus membrane. It catalyses the reaction hydrogenselenide + ATP + H2O = selenophosphate + AMP + phosphate + 2 H(+). Synthesizes selenophosphate from selenide and ATP. The polypeptide is Selenide, water dikinase 1 (sephs1) (Danio rerio (Zebrafish)).